Consider the following 288-residue polypeptide: ATP synthase gamma chain (288 aa).

The protein belongs to the ATPase gamma chain family. F-type ATPases have 2 components, CF(1) - the catalytic core - and CF(0) - the membrane proton channel. CF(1) has five subunits: alpha(3), beta(3), gamma(1), delta(1), epsilon(1). CF(0) has three main subunits: a, b and c.

The protein localises to the cell inner membrane. Produces ATP from ADP in the presence of a proton gradient across the membrane. The gamma chain is believed to be important in regulating ATPase activity and the flow of protons through the CF(0) complex. This chain is ATP synthase gamma chain, found in Rickettsia canadensis (strain McKiel).